A 253-amino-acid polypeptide reads, in one-letter code: uncharacterized protein (253 aa).

NADP(+)-binding residues include I17, S36, D62, N89, K123, Y158, K162, V191, and T193. Y158 (proton acceptor) is an active-site residue. K162 functions as the Lowers pKa of active site Tyr in the catalytic mechanism.

The protein belongs to the short-chain dehydrogenases/reductases (SDR) family.

Its subcellular location is the cytoplasm. It is found in the nucleus. This is an uncharacterized protein from Schizosaccharomyces pombe (strain 972 / ATCC 24843) (Fission yeast).